A 3390-amino-acid polypeptide reads, in one-letter code: MNNQRKKTGKPSINMLKRVRNRVSTGSQLAKRFSKGLLNGQGPMKLVMAFIAFLRFLAIPPTAGVLARWGTFKKSGAIKVLKGFKKEISNMLSIINQRKKTSLCLMMILPAALAFHLTSRDGEPRMIVGKNERGKSLLFKTASGINMCTLIAMDLGEMCDDTVTYKCPHITEVEPEDIDCWCNLTSTWVTYGTCNQAGEHRRDKRSVALAPHVGMGLDTRTQTWMSAEGAWRQVEKVETWALRHPGFTILALFLAHYIGTSLTQKVVIFILLMLVTPSMTMRCVGVGNRDFVEGLSGATWVDVVLEHGGCVTTMAKNKPTLDIELQKTEATQLATLRKLCIEGKITNITTDSRCPTQGEAVLPEEQDQNYVCKHTYVDRGWGNGCGLFGKGSLVTCAKFQCLEPIEGKVVQYENLKYTVIITVHTGDQHQVGNETQGVTAEITPQASTTEAILPEYGTLGLECSPRTGLDFNEMILLTMKNKAWMVHRQWFFDLPLPWASGATTETPTWNRKELLVTFKNAHAKKQEVVVLGSQEGAMHTALTGATEIQNSGGTSIFAGHLKCRLKMDKLELKGMSYAMCTNTFVLKKEVSETQHGTILIKVEYKGEDAPCKIPFSTEDGQGKAHNGRLITANPVVTKKEEPVNIEAEPPFGESNIVIGIGDNALKINWYKKGSSIGKMFEATERGARRMAILGDTAWDFGSVGGVLNSLGKMVHQIFGSAYTALFSGVSWVMKIGIGVLLTWIGLNSKNTSMSFSCIAIGIITLYLGAVVQADMGCVINWKGKELKCGSGIFVTNEVHTWTEQYKFQADSPKRLATAIAGAWENGVCGIRSTTRMENLLWKQIANELNYILWENNIKLTVVVGDTLGVLEQGKRTLTPQPMELKYSWKTWGKAKIVTAETQNSSFIIDGPNTPECPSASRAWNVWEVEDYGFGVFTTNIWLKLREVYTQLCDHRLMSAAVKDERAVHADMGYWIESQKNGSWKLEKASLIEVKTCTWPKSHTLWTNGVLESDMIIPKSLAGPISQHNYRPGYHTQTAGPWHLGKLELDFNYCEGTTVVITESCGTRGPSLRTTTVSGKLIHEWCCRSCTLPPLRYMGEDGCWYGMEIRPISEKEENMVKSLVSAGSGKVDNFTMGVLCLAILFEEVLRGKFGKKHMIAGVFFTFVLLLSGQITWRDMAHTLIMIGSNASDRMGMGVTYLALIATFKIQPFLALGFFLRKLTSRENLLLGVGLAMATTLQLPEDIEQMANGVALGLMALKLITQFETYQLWTALVSLTCSNTIFTLTVAWRTATLILAGVSLLPVCQSSSMRKTDWLPMTVAAMGVPPLPLFIFSLKDTLKRRSWPLNEGVMAVGLVSILASSLLRNDVPMAGPLVAGGLLIACYVITGTSADLTVEKAPDVTWEEEAEQTGVSHNLMITVDDDGTMRIKDDETENILTVLLKTALLIVSGIFPYSIPATLLVWHTWQKQTQRSGVLWDVPSPPETQKAELEEGVYRIKQQGIFGKTQVGVGVQKEGVFHTMWHVTRGAVLTHNGKRLEPNWASVKKDLISYGGGWRLSAQWQKGEEVQVIAVEPGKNPKNFQTTPGTFQTTTGEIGAIALDFKPGTSGSPIINREGKVVGLYGNGVVTKNGGYVSGIAQTNAEPDGPTPELEEEMFKKRNLTIMDLHPGSGKTRKYLPAIVREAIKRRLRTLILAPTRVVAAEMEEALKGLPIRYQTTATKSEHTGREIVDLMCHATFTMRLLSPVRVPNYNLIIMDEAHFTDPASIAARGYISTRVGMGEAAAIFMTATPPGTADAFPQSNAPIQDEERDIPERSWNSGNEWITDFAGKTVWFVPSIKAGNDIANCLRKNGKKVIQLSRKTFDTEYQKTKLNDWDFVVTTDISEMGANFKADRVIDPRRCLKPVILTDGPERVILAGPMPVTAASAAQRRGRVGRNPQKENDQYIFTGQPLNNDEDHAHWTEAKMLLDNINTPEGIIPALFEPEREKSAAIDGEYRLKGESRKTFVELMRRGDLPVWLAHKVASEGIKYTDRKWCFDGQRNNQILEENMDVEIWTKEGEKKKLRPRWLDARTYSDPLALKEFKDFAAGRKSIALDLVTEIGRVPSHLAHRTRNALDNLVMLHTSEDGGRAYRHAVEELPETMETLLLLGLMILLTGGAMLFLISGKGIGKTSIGLICVIASSGMLWMAEVPLQWIASAIVLEFFMMVLLIPEPEKQRTPQDNQLAYVVIGILTLAATIAANEMGLLETTKRDLGMSKEPGVVSPTSYLDVDLHPASAWTLYAVATTVITPMLRHTIENSTANVSLAAIANQAVVLMGLDKGWPISKMDLGVPLLALGCYSQVNPLTLTAAVLLLITHYAIIGPGLQAKATREAQKRTAAGIMKNPTVDGIMTIDLDSVIFDSKFEKQLGQVMLLVLCAVQLLLMRTSWALCEALTLATGPITTLWEGSPGKFWNTTIAVSMANIFRGSYLAGAGLAFSIMKSVGTGKRGTGSQGETLGEKWKKKLNQLSRKEFDLYKKSGITEVDRTEAKEGLKRGETTHHAVSRGSAKLQWFVERNMVVPEGRVIDLGCGRGGWSYYCAGLKKVTEVRGYTKGGPGHEEPVPMSTYGWNIVKLMSGKDVFYLPPEKCDTLLCDIGESSPSPTVEESRTIRVLKMVEPWLKNNQFCIKVLNPYMPTVIEHLERLQRKHGGMLVRNPLSRNSTHEMYWISNGTGNIVSSVNMVSRLLLNRFTMTHRRPTIEKDVDLGAGTRHVNAEPETPNMDVIGERIKRIKEEHNSTWHYDDENPYKTWAYHGSYEVKATGSASSMINGVVKLLTKPWDVVPMVTQMAMTDTTPFGQQRVFKEKVDTRTPRPMPGTRKAMEITAEWLWRTLGRNKRPRLCTREEFTKKVRTNAAMGAVFTEENQWDSAKAAVEDEEFWKLVDRERELHKLGKCGSCVYNMMGKREKKLGEFGKAKGSRAIWYMWLGARYLEFEALGFLNEDHWFSRENSYSGVEGEGLHKLGYILRDISKIPGGAMYADDTAGWDTRITEDDLHNEEKIIQQMDPEHRQLANAIFKLTYQNKVVKVQRPTPTGTVMDIISRKDQRGSGQLGTYGLNTFTNMEAQLVRQMEGEGVLTKADLENPHLLEKKITQWLETKGVERLKRMAISGDDCVVKPIDDRFANALLALNDMGKVRKDIPQWQPSKGWHDWQQVPFCSHHFHELIMKDGRKLVVPCRPQDELIGRARISQGAGWSLRETACLGKAYAQMWSLMYFHRRDLRLASNAICSAVPVHWVPTSRTTWSIHAHHQWMTTEDMLTVWNRVWIEENPWMEDKTPVTTWENVPYLGKREDQWCGSLIGLTSRATWAQNIPTAIQQVRSLIGNEEFLDYMPSMKRFRKEEESEGAIW.

The interval 1–15 is interaction with host EXOC1; it reads MNNQRKKTGKPSINM. At 1–100 the chain is on the cytoplasmic side; sequence MNNQRKKTGK…MLSIINQRKK (100 aa). A hydrophobic; homodimerization of capsid protein C region spans residues 37 to 72; it reads LLNGQGPMKLVMAFIAFLRFLAIPPTAGVLARWGTF. The propeptide at 101 to 114 is ER anchor for the capsid protein C, removed in mature form by serine protease NS3; sequence TSLCLMMILPAALA. A helical transmembrane segment spans residues 101 to 120; it reads TSLCLMMILPAALAFHLTSR. Residues 121 to 243 lie on the Extracellular side of the membrane; sequence DGEPRMIVGK…VEKVETWALR (123 aa). N-linked (GlcNAc...) asparagine; by host glycosylation is present at N183. A helical transmembrane segment spans residues 244 to 264; it reads HPGFTILALFLAHYIGTSLTQ. K265 is a topological domain (cytoplasmic). Residues 266 to 280 traverse the membrane as a helical segment; it reads VVIFILLMLVTPSMT. The Extracellular segment spans residues 281 to 723; it reads MRCVGVGNRD…VHQIFGSAYT (443 aa). 4 disulfide bridges follow: C283/C310, C340/C401, C354/C385, and C372/C396. N347 is a glycosylation site (N-linked (GlcNAc...) asparagine; by host). A fusion peptide region spans residues 378 to 391; the sequence is DRGWGNGCGLFGKG. N433 carries an N-linked (GlcNAc...) asparagine; by host glycan. Cystine bridges form between C463–C563 and C580–C611. Residues 724–744 traverse the membrane as a helical segment; sequence ALFSGVSWVMKIGIGVLLTWI. Residues 745–750 lie on the Cytoplasmic side of the membrane; the sequence is GLNSKN. A helical transmembrane segment spans residues 751–771; sequence TSMSFSCIAIGIITLYLGAVV. The Extracellular segment spans residues 772 to 1193; the sequence is QADMGCVINW…MIGSNASDRM (422 aa). 6 cysteine pairs are disulfide-bonded: C777–C788, C828–C916, C952–C996, C1053–C1102, C1064–C1086, and C1085–C1089. 2 N-linked (GlcNAc...) asparagine; by host glycosylation sites follow: N903 and N980. Residues N1132 and N1188 are each glycosylated (N-linked (GlcNAc...) asparagine; by host). Residues 1194-1218 form a helical membrane-spanning segment; sequence GMGVTYLALIATFKIQPFLALGFFL. At 1219-1224 the chain is on the cytoplasmic side; the sequence is RKLTSR. A helical transmembrane segment spans residues 1225–1243; that stretch reads ENLLLGVGLAMATTLQLPE. At 1244 to 1267 the chain is on the lumenal side; it reads DIEQMANGVALGLMALKLITQFET. A helical membrane pass occupies residues 1268–1288; that stretch reads YQLWTALVSLTCSNTIFTLTV. Residue A1289 is a topological domain, cytoplasmic. A helical membrane pass occupies residues 1290 to 1308; sequence WRTATLILAGVSLLPVCQS. The Lumenal portion of the chain corresponds to 1309 to 1315; it reads SSMRKTD. Residues 1316 to 1336 form a helical membrane-spanning segment; sequence WLPMTVAAMGVPPLPLFIFSL. Over 1337–1344 the chain is Cytoplasmic; the sequence is KDTLKRRS. A helical transmembrane segment spans residues 1345-1365; that stretch reads WPLNEGVMAVGLVSILASSLL. The Lumenal segment spans residues 1366–1368; it reads RND. The helical transmembrane segment at 1369-1389 threads the bilayer; it reads VPMAGPLVAGGLLIACYVITG. Residues 1390–1443 lie on the Cytoplasmic side of the membrane; that stretch reads TSADLTVEKAPDVTWEEEAEQTGVSHNLMITVDDDGTMRIKDDETENILTVLLK. Positions 1396 to 1435 are interacts with and activates NS3 protease; it reads VEKAPDVTWEEEAEQTGVSHNLMITVDDDGTMRIKDDETE. Positions 1444 to 1464 form an intramembrane region, helical; sequence TALLIVSGIFPYSIPATLLVW. Topologically, residues 1465 to 2146 are cytoplasmic; sequence HTWQKQTQRS…VEELPETMET (682 aa). The 178-residue stretch at 1474-1651 folds into the Peptidase S7 domain; it reads SGVLWDVPSP…NAEPDGPTPE (178 aa). Active-site charge relay system; for serine protease NS3 activity residues include H1524, D1548, and S1608. Positions 1654-1810 constitute a Helicase ATP-binding domain; the sequence is EEMFKKRNLT…QSNAPIQDEE (157 aa). The important for RNA-binding stretch occupies residues 1658–1661; the sequence is KKRN. 1667-1674 is a binding site for ATP; that stretch reads LHPGSGKT. The DEAH box motif lies at 1758 to 1761; that stretch reads DEAH. Positions 1820–1986 constitute a Helicase C-terminal domain; it reads SGNEWITDFA…GIIPALFEPE (167 aa). K1862 carries the N6-acetyllysine; by host modification. A helical transmembrane segment spans residues 2147-2167; sequence LLLLGLMILLTGGAMLFLISG. Residues 2168-2169 are Lumenal-facing; sequence KG. An intramembrane region (helical) is located at residues 2170–2190; it reads IGKTSIGLICVIASSGMLWMA. E2191 is a topological domain (lumenal). The helical transmembrane segment at 2192–2212 threads the bilayer; the sequence is VPLQWIASAIVLEFFMMVLLI. The Cytoplasmic portion of the chain corresponds to 2213–2227; that stretch reads PEPEKQRTPQDNQLA. Residues 2228 to 2248 form a helical membrane-spanning segment; it reads YVVIGILTLAATIAANEMGLL. The Lumenal portion of the chain corresponds to 2249–2273; it reads ETTKRDLGMSKEPGVVSPTSYLDVD. An intramembrane region (helical) is located at residues 2274 to 2294; that stretch reads LHPASAWTLYAVATTVITPML. The Lumenal portion of the chain corresponds to 2295–2305; it reads RHTIENSTANV. N-linked (GlcNAc...) asparagine; by host glycosylation is found at N2300 and N2304. The helical intramembrane region spans 2306 to 2326; that stretch reads SLAAIANQAVVLMGLDKGWPI. Over 2327–2346 the chain is Lumenal; the sequence is SKMDLGVPLLALGCYSQVNP. Residues 2347–2367 form a helical membrane-spanning segment; that stretch reads LTLTAAVLLLITHYAIIGPGL. The Cytoplasmic segment spans residues 2368–2412; it reads QAKATREAQKRTAAGIMKNPTVDGIMTIDLDSVIFDSKFEKQLGQ. Residues 2413–2433 traverse the membrane as a helical segment; the sequence is VMLLVLCAVQLLLMRTSWALC. Topologically, residues 2434–2458 are lumenal; sequence EALTLATGPITTLWEGSPGKFWNTT. N-linked (GlcNAc...) asparagine; by host glycosylation is present at N2456. Residues 2459–2479 traverse the membrane as a helical segment; sequence IAVSMANIFRGSYLAGAGLAF. Topologically, residues 2480-3390 are cytoplasmic; sequence SIMKSVGTGK…KEEESEGAIW (911 aa). The mRNA cap 0-1 NS5-type MT domain occupies 2492–2753; it reads TGSQGETLGE…DVDLGAGTRH (262 aa). An S-adenosyl-L-methionine-binding site is contributed by S2546. Residue S2546 is modified to Phosphoserine. Residue K2551 is the For 2'-O-MTase activity of the active site. Positions 2567-2570 match the SUMO-interacting motif motif; that stretch reads VIDL. Positions 2576, 2577, 2594, 2595, 2621, and 2622 each coordinate S-adenosyl-L-methionine. Catalysis depends on D2636, which acts as the For 2'-O-MTase activity. I2637 is an S-adenosyl-L-methionine binding site. Catalysis depends on for 2'-O-MTase activity residues K2670 and E2706. S-adenosyl-L-methionine is bound at residue Y2708. Zn(2+)-binding residues include E2927, H2931, C2936, and C2939. Positions 3018 to 3168 constitute a RdRp catalytic domain; the sequence is AMYADDTAGW…PIDDRFANAL (151 aa). The Zn(2+) site is built by H3202, C3218, and C3337.

The protein in the N-terminal section; belongs to the class I-like SAM-binding methyltransferase superfamily. mRNA cap 0-1 NS5-type methyltransferase family. Homodimer. Interacts (via N-terminus) with host EXOC1 (via C-terminus); this interaction results in EXOC1 degradation through the proteasome degradation pathway. As to quaternary structure, forms heterodimers with envelope protein E in the endoplasmic reticulum and Golgi. In terms of assembly, homodimer; in the endoplasmic reticulum and Golgi. Interacts with protein prM. Interacts with non-structural protein 1. Homodimer; Homohexamer when secreted. Interacts with envelope protein E. As to quaternary structure, interacts (via N-terminus) with serine protease NS3. In terms of assembly, forms a heterodimer with serine protease NS3. May form homooligomers. Forms a heterodimer with NS2B. Interacts with NS4B. Interacts with unphosphorylated RNA-directed RNA polymerase NS5; this interaction stimulates RNA-directed RNA polymerase NS5 guanylyltransferase activity. Interacts with host SHFL. As to quaternary structure, interacts with host MAVS; this interaction inhibits the synthesis of IFN-beta. Interacts with host SHFL. Interacts with host AUP1; the interaction occurs in the presence of Dengue virus NS4B and induces lipophagy which facilitates production of virus progeny particles. In terms of assembly, interacts with serine protease NS3. Homodimer. Interacts with host STAT2; this interaction inhibits the phosphorylation of the latter, and, when all viral proteins are present (polyprotein), targets STAT2 for degradation. Interacts with serine protease NS3. Post-translationally, specific enzymatic cleavages in vivo yield mature proteins. Cleavages in the lumen of endoplasmic reticulum are performed by host signal peptidase, whereas cleavages in the cytoplasmic side are performed by serine protease NS3. Signal cleavage at the 2K-4B site requires a prior NS3 protease-mediated cleavage at the 4A-2K site. Cleaved in post-Golgi vesicles by a host furin, releasing the mature small envelope protein M, and peptide pr. This cleavage is incomplete as up to 30% of viral particles still carry uncleaved prM. In terms of processing, N-glycosylated. Post-translationally, N-glycosylated. The excreted form is glycosylated and this is required for efficient secretion of the protein from infected cells. Acetylated by host KAT5. Acetylation modulates NS3 RNA-binding and unwinding activities and plays an important positive role for viral replication. In terms of processing, sumoylation of RNA-directed RNA polymerase NS5 increases NS5 protein stability allowing proper viral RNA replication. Post-translationally, phosphorylated on serines residues. This phosphorylation may trigger NS5 nuclear localization.

The protein resides in the virion. Its subcellular location is the host nucleus. It localises to the host cytoplasm. The protein localises to the host perinuclear region. It is found in the secreted. The protein resides in the virion membrane. Its subcellular location is the host endoplasmic reticulum membrane. It localises to the host mitochondrion. The enzyme catalyses Selective hydrolysis of -Xaa-Xaa-|-Yaa- bonds in which each of the Xaa can be either Arg or Lys and Yaa can be either Ser or Ala.. It catalyses the reaction RNA(n) + a ribonucleoside 5'-triphosphate = RNA(n+1) + diphosphate. It carries out the reaction a ribonucleoside 5'-triphosphate + H2O = a ribonucleoside 5'-diphosphate + phosphate + H(+). The catalysed reaction is ATP + H2O = ADP + phosphate + H(+). The enzyme catalyses a 5'-end (5'-triphosphoguanosine)-ribonucleoside in mRNA + S-adenosyl-L-methionine = a 5'-end (N(7)-methyl 5'-triphosphoguanosine)-ribonucleoside in mRNA + S-adenosyl-L-homocysteine. It catalyses the reaction a 5'-end (N(7)-methyl 5'-triphosphoguanosine)-ribonucleoside in mRNA + S-adenosyl-L-methionine = a 5'-end (N(7)-methyl 5'-triphosphoguanosine)-(2'-O-methyl-ribonucleoside) in mRNA + S-adenosyl-L-homocysteine + H(+). In terms of biological role, plays a role in virus budding by binding to the cell membrane and gathering the viral RNA into a nucleocapsid that forms the core of a mature virus particle. During virus entry, may induce genome penetration into the host cytoplasm after hemifusion induced by the surface proteins. Can migrate to the cell nucleus where it modulates host functions. Overcomes the anti-viral effects of host EXOC1 by sequestering and degrading the latter through the proteasome degradation pathway. Functionally, inhibits RNA silencing by interfering with host Dicer. Its function is as follows. Prevents premature fusion activity of envelope proteins in trans-Golgi by binding to envelope protein E at pH6.0. After virion release in extracellular space, gets dissociated from E dimers. Acts as a chaperone for envelope protein E during intracellular virion assembly by masking and inactivating envelope protein E fusion peptide. prM is the only viral peptide matured by host furin in the trans-Golgi network probably to avoid catastrophic activation of the viral fusion activity in acidic Golgi compartment prior to virion release. prM-E cleavage is inefficient, and many virions are only partially matured. These uncleaved prM would play a role in immune evasion. In terms of biological role, may play a role in virus budding. Exerts cytotoxic effects by activating a mitochondrial apoptotic pathway through M ectodomain. May display a viroporin activity. Functionally, binds to host cell surface receptor and mediates fusion between viral and cellular membranes. Envelope protein is synthesized in the endoplasmic reticulum in the form of heterodimer with protein prM. They play a role in virion budding in the ER, and the newly formed immature particle is covered with 60 spikes composed of heterodimer between precursor prM and envelope protein E. The virion is transported to the Golgi apparatus where the low pH causes dissociation of PrM-E heterodimers and formation of E homodimers. prM-E cleavage is inefficient, and many virions are only partially matured. These uncleaved prM would play a role in immune evasion. Its function is as follows. Involved in immune evasion, pathogenesis and viral replication. Once cleaved off the polyprotein, is targeted to three destinations: the viral replication cycle, the plasma membrane and the extracellular compartment. Essential for viral replication. Required for formation of the replication complex and recruitment of other non-structural proteins to the ER-derived membrane structures. Excreted as a hexameric lipoparticle that plays a role against host immune response. Antagonizing the complement function. Binds to the host macrophages and dendritic cells. Inhibits signal transduction originating from Toll-like receptor 3 (TLR3). Disrupts the host endothelial glycocalyx layer of host pulmonary microvascular endothelial cells, inducing degradation of sialic acid and shedding of heparan sulfate proteoglycans. NS1 induces expression of sialidases, heparanase, and activates cathepsin L, which activates heparanase via enzymatic cleavage. These effects are probably linked to the endothelial hyperpermeability observed in severe dengue disease. In terms of biological role, component of the viral RNA replication complex that functions in virion assembly and antagonizes the host immune response. Functionally, required cofactor for the serine protease function of NS3. May have membrane-destabilizing activity and form viroporins. Its function is as follows. Displays three enzymatic activities: serine protease, NTPase and RNA helicase. NS3 serine protease, in association with NS2B, performs its autocleavage and cleaves the polyprotein at dibasic sites in the cytoplasm: C-prM, NS2A-NS2B, NS2B-NS3, NS3-NS4A, NS4A-2K and NS4B-NS5. NS3 RNA helicase binds RNA and unwinds dsRNA in the 3' to 5' direction. Regulates the ATPase activity of the NS3 helicase activity. NS4A allows NS3 helicase to conserve energy during unwinding. Plays a role in the inhibition of the host innate immune response. Interacts with host MAVS and thereby prevents the interaction between RIGI and MAVS. In turn, IFN-beta production is impaired. Interacts with host AUP1 which mediates induction of lipophagy in host cells and facilitates production of virus progeny particles. In terms of biological role, functions as a signal peptide for NS4B and is required for the interferon antagonism activity of the latter. Functionally, induces the formation of ER-derived membrane vesicles where the viral replication takes place. Inhibits interferon (IFN)-induced host STAT1 phosphorylation and nuclear translocation, thereby preventing the establishment of cellular antiviral state by blocking the IFN-alpha/beta pathway. Its function is as follows. Replicates the viral (+) and (-) RNA genome, and performs the capping of genomes in the cytoplasm. NS5 methylates viral RNA cap at guanine N-7 and ribose 2'-O positions. Besides its role in RNA genome replication, also prevents the establishment of cellular antiviral state by blocking the interferon-alpha/beta (IFN-alpha/beta) signaling pathway. Inhibits host TYK2 and STAT2 phosphorylation, thereby preventing activation of JAK-STAT signaling pathway. The chain is Genome polyprotein (pol) from Dengue virus type 3 (strain Sri Lanka/1266/2000) (DENV-3).